The chain runs to 1330 residues: G2/mitotic-specific cyclin-B3 (1330 aa).

The disordered stretch occupies residues 1 to 50 (MPLPLPSRSSKPETKKSRSSKIVPSGNNGQSEKRGENYQEKISSSSPRRL). Residues 20–30 (SKIVPSGNNGQ) show a composition bias toward polar residues. Positions 54-62 (RSAFEDLTN) match the D-box motif. The tract at residues 1002-1059 (VETSSRVPSTPPESRAGMSSVGKLSTTSKSSVCESSSNKPSSSWGESSQKEMTPLEDI) is disordered. Low complexity predominate over residues 1026–1048 (STTSKSSVCESSSNKPSSSWGES).

Belongs to the cyclin family. Cyclin AB subfamily. As to quaternary structure, interacts with CDK2 kinase. Ubiquitinated. Ubiquitination leads to its degradation during anaphase entry, after degradation of CCNB1.

It is found in the nucleus. Cyclins are positive regulatory subunits of the cyclin-dependent kinases (CDKs), and thereby play an essential role in the control of the cell cycle, notably via their destruction during cell division. Its tissue specificity suggest that it may be required during early meiotic prophase I. The sequence is that of G2/mitotic-specific cyclin-B3 (CCNB3) from Canis lupus familiaris (Dog).